The following is a 61-amino-acid chain: Small ribosomal subunit protein uS14 (61 aa).

Residues Cys-24, Cys-27, Cys-40, and Cys-43 each coordinate Zn(2+).

The protein belongs to the universal ribosomal protein uS14 family. Zinc-binding uS14 subfamily. As to quaternary structure, part of the 30S ribosomal subunit. Contacts proteins S3 and S10. Zn(2+) serves as cofactor.

In terms of biological role, binds 16S rRNA, required for the assembly of 30S particles and may also be responsible for determining the conformation of the 16S rRNA at the A site. The sequence is that of Small ribosomal subunit protein uS14 from Mesomycoplasma hyopneumoniae (strain 232) (Mycoplasma hyopneumoniae).